Here is a 174-residue protein sequence, read N- to C-terminus: NADH-ubiquinone oxidoreductase chain 6 (174 aa).

5 helical membrane-spanning segments follow: residues 1–21 (MTYT…GFSS), 24–44 (SPIY…AVIL), 47–67 (GGGY…MVVF), 86–106 (VEVL…VLWA), and 151–171 (WLVV…IEIA).

This sequence belongs to the complex I subunit 6 family. In terms of assembly, core subunit of respiratory chain NADH dehydrogenase (Complex I) which is composed of 45 different subunits.

Its subcellular location is the mitochondrion inner membrane. The enzyme catalyses a ubiquinone + NADH + 5 H(+)(in) = a ubiquinol + NAD(+) + 4 H(+)(out). Functionally, core subunit of the mitochondrial membrane respiratory chain NADH dehydrogenase (Complex I) which catalyzes electron transfer from NADH through the respiratory chain, using ubiquinone as an electron acceptor. Essential for the catalytic activity and assembly of complex I. The protein is NADH-ubiquinone oxidoreductase chain 6 (MT-ND6) of Hylobates lar (Lar gibbon).